A 133-amino-acid polypeptide reads, in one-letter code: Aspartate 1-decarboxylase (133 aa).

Ser26 serves as the catalytic Schiff-base intermediate with substrate; via pyruvic acid. At Ser26 the chain carries Pyruvic acid (Ser). Thr58 contacts substrate. The active-site Proton donor is the Tyr59. Residue Gly74 to Ala76 participates in substrate binding.

This sequence belongs to the PanD family. As to quaternary structure, heterooctamer of four alpha and four beta subunits. Pyruvate serves as cofactor. In terms of processing, is synthesized initially as an inactive proenzyme, which is activated by self-cleavage at a specific serine bond to produce a beta-subunit with a hydroxyl group at its C-terminus and an alpha-subunit with a pyruvoyl group at its N-terminus.

It localises to the cytoplasm. It carries out the reaction L-aspartate + H(+) = beta-alanine + CO2. Its pathway is cofactor biosynthesis; (R)-pantothenate biosynthesis; beta-alanine from L-aspartate: step 1/1. Catalyzes the pyruvoyl-dependent decarboxylation of aspartate to produce beta-alanine. This is Aspartate 1-decarboxylase from Legionella pneumophila (strain Lens).